The chain runs to 132 residues: MKIVKLQDIIGTEREVHGEGWRSRRILLKKDKMGFSLHETIWPPGHELRMWYKNHLEAVYCVAGNGSIEDLETGEVHELYDGVCYALDKHDRHILRGGTEEMRLVCVFNPPVTGLEVHDEDGAYCLVEDDDD.

It belongs to the ectoine synthase family.

The catalysed reaction is (2S)-4-acetamido-2-aminobutanoate = L-ectoine + H2O. Its pathway is amine and polyamine biosynthesis; ectoine biosynthesis; L-ectoine from L-aspartate 4-semialdehyde: step 3/3. Catalyzes the circularization of gamma-N-acetyl-alpha,gamma-diaminobutyric acid (ADABA) to ectoine (1,4,5,6-tetrahydro-2-methyl-4-pyrimidine carboxylic acid), which is an excellent osmoprotectant. This chain is L-ectoine synthase, found in Alkalilimnicola ehrlichii (strain ATCC BAA-1101 / DSM 17681 / MLHE-1).